The primary structure comprises 418 residues: MFRRLLIATVVGILAAFAVAGFRHAMLLLEWLFLNNDSGSLVNAATNLSPWRRLLTPALGGLAAGLLLMGWQKFTQQRPHAPTDYMEALQTDGQFDYAASLVKSLASLLVVTSGSAIGREGAMILLAALAASCFAQRFTPRQEWKLWIACGAAAGMAAAYRAPLAGSLFIAEVLFGTMMLASLGPVIISAVVALLVSNLINHSDALLYSVQLSVTVQARDYALIISTGVLAGLCGPLLLTLMNACHRGFVSLKLAPPWQLALGGLIVGLLSLFTPAVWGNGYSTVQSFLTAPPLLMIIAGIFLCKLCAVLASSGSGAPGGVFTPTLFIGLAIGMLYGRSLGLWFPDGEEITLLLGLTGMATLLAATTHAPIMSTLMICEMTGEYQLLPGLLIACVIASVISRTLHRDSIYRQHTAKHS.

10 helical membrane-spanning segments follow: residues 5–25 (LLIA…FRHA), 54–74 (LLTP…WQKF), 146–166 (LWIA…PLAG), 168–188 (LFIA…PVII), 222–242 (ALII…LTLM), 258–278 (WQLA…PAVW), 291–311 (APPL…AVLA), 316–336 (GAPG…GMLY), 352–372 (LLLG…APIM), and 380–400 (MTGE…ASVI).

Belongs to the chloride channel (TC 2.A.49) family. ClcB subfamily.

It is found in the cell inner membrane. Its function is as follows. Probably acts as an electrical shunt for an outwardly-directed proton pump that is linked to amino acid decarboxylation, as part of the extreme acid resistance (XAR) response. This is Voltage-gated ClC-type chloride channel ClcB from Escherichia coli O127:H6 (strain E2348/69 / EPEC).